The chain runs to 100 residues: NADH-quinone oxidoreductase subunit K 2 (100 aa).

The next 3 membrane-spanning stretches (helical) occupy residues 2 to 22 (LAIE…TIGV), 29 to 49 (IVIF…FIAF), and 61 to 81 (FVFF…ALMI).

The protein belongs to the complex I subunit 4L family. As to quaternary structure, NDH-1 is composed of 14 different subunits. Subunits NuoA, H, J, K, L, M, N constitute the membrane sector of the complex.

The protein localises to the cell inner membrane. It catalyses the reaction a quinone + NADH + 5 H(+)(in) = a quinol + NAD(+) + 4 H(+)(out). Functionally, NDH-1 shuttles electrons from NADH, via FMN and iron-sulfur (Fe-S) centers, to quinones in the respiratory chain. The immediate electron acceptor for the enzyme in this species is believed to be ubiquinone. Couples the redox reaction to proton translocation (for every two electrons transferred, four hydrogen ions are translocated across the cytoplasmic membrane), and thus conserves the redox energy in a proton gradient. The protein is NADH-quinone oxidoreductase subunit K 2 of Geobacter sp. (strain M21).